The following is a 359-amino-acid chain: Zinc finger CCCH domain-containing protein 20 (359 aa).

C3H1-type zinc fingers lie at residues 75–107, 119–145, and 153–177; these read TCDH…HPGE, YSGT…HGVF, and RYRT…HSPD. 2 disordered regions span residues 207–226 and 334–359; these read SISP…SDSS and MGRI…DLVM.

In Arabidopsis thaliana (Mouse-ear cress), this protein is Zinc finger CCCH domain-containing protein 20.